The sequence spans 994 residues: Myosin IA heavy chain (994 aa).

The Myosin motor domain occupies 12–720; that stretch reads VGVEDLIMLT…PLFLLEDKRN (709 aa). ATP is bound at residue 105-112; that stretch reads GESGAGKT. The segment at 574–654 is actin-binding; the sequence is TFIPTDKKRP…RAGYCYRQTF (81 aa). IQ domains are found at residues 723-744 and 745-774; these read LNDLATKIGSVWKMYKQRKWYL and RTLAAIKIQRTYRGWLLVRECVKLKNQSIS. The region spanning 782–970 is the TH1 domain; sequence RNRQSIKLSK…ANSPSFTAKA (189 aa).

The protein belongs to the TRAFAC class myosin-kinesin ATPase superfamily. Myosin family. As to quaternary structure, myosin I heavy chain is single-headed. Dimer of a heavy and a light chain. Inability to self-assemble into filaments.

In terms of biological role, actin-based motor protein, possibly involved in a wide range of motile processes, such as cell movement across a surface, and extension and retraction of pseudopodia or lamellipodia. In Dictyostelium discoideum (Social amoeba), this protein is Myosin IA heavy chain (myoA).